Here is a 216-residue protein sequence, read N- to C-terminus: Ribosomal RNA small subunit methyltransferase G (216 aa).

Residues glycine 73, leucine 78, 124–125 (AE), and arginine 139 each bind S-adenosyl-L-methionine.

Belongs to the methyltransferase superfamily. RNA methyltransferase RsmG family.

It is found in the cytoplasm. Specifically methylates the N7 position of guanine in position 518 of 16S rRNA. This chain is Ribosomal RNA small subunit methyltransferase G, found in Arthrobacter sp. (strain FB24).